Reading from the N-terminus, the 381-residue chain is Acetylornithine deacetylase (381 aa).

Position 79 (histidine 79) interacts with Zn(2+). Aspartate 81 is an active-site residue. Aspartate 111 serves as a coordination point for Zn(2+). Residue glutamate 143 is part of the active site. The Zn(2+) site is built by glutamate 144, glutamate 168, and histidine 354.

Belongs to the peptidase M20A family. ArgE subfamily. Homodimer. The cofactor is Zn(2+). Requires Co(2+) as cofactor. Glutathione serves as cofactor.

It is found in the cytoplasm. It catalyses the reaction N(2)-acetyl-L-ornithine + H2O = L-ornithine + acetate. The protein operates within amino-acid biosynthesis; L-arginine biosynthesis; L-ornithine from N(2)-acetyl-L-ornithine (linear): step 1/1. In terms of biological role, catalyzes the hydrolysis of the amide bond of N(2)-acetylated L-amino acids. Cleaves the acetyl group from N-acetyl-L-ornithine to form L-ornithine, an intermediate in L-arginine biosynthesis pathway, and a branchpoint in the synthesis of polyamines. The sequence is that of Acetylornithine deacetylase from Buchnera aphidicola subsp. Acyrthosiphon pisum (strain 5A).